The sequence spans 631 residues: tRNA uridine 5-carboxymethylaminomethyl modification enzyme MnmG (631 aa).

FAD-binding positions include 13–18 (GGGHAG), Val125, and Ser180. NAD(+) is bound at residue 273 to 287 (GPRYCPSIEDKVMRF). Residue Gln370 participates in FAD binding.

The protein belongs to the MnmG family. As to quaternary structure, homodimer. Heterotetramer of two MnmE and two MnmG subunits. It depends on FAD as a cofactor.

It localises to the cytoplasm. In terms of biological role, NAD-binding protein involved in the addition of a carboxymethylaminomethyl (cmnm) group at the wobble position (U34) of certain tRNAs, forming tRNA-cmnm(5)s(2)U34. The sequence is that of tRNA uridine 5-carboxymethylaminomethyl modification enzyme MnmG from Vibrio atlanticus (strain LGP32) (Vibrio splendidus (strain Mel32)).